Reading from the N-terminus, the 82-residue chain is Photosystem I iron-sulfur center (82 aa).

4Fe-4S ferredoxin-type domains are found at residues 2–31 (SHTV…MVPW) and 37–68 (GQIA…VRVY). Residues cysteine 11, cysteine 14, cysteine 17, cysteine 21, cysteine 48, cysteine 51, cysteine 54, and cysteine 58 each contribute to the [4Fe-4S] cluster site.

As to quaternary structure, the eukaryotic PSI reaction center is composed of at least 11 subunits. [4Fe-4S] cluster serves as cofactor.

Its subcellular location is the plastid. It is found in the chloroplast thylakoid membrane. The catalysed reaction is reduced [plastocyanin] + hnu + oxidized [2Fe-2S]-[ferredoxin] = oxidized [plastocyanin] + reduced [2Fe-2S]-[ferredoxin]. Apoprotein for the two 4Fe-4S centers FA and FB of photosystem I (PSI); essential for photochemical activity. FB is the terminal electron acceptor of PSI, donating electrons to ferredoxin. The C-terminus interacts with PsaA/B/D and helps assemble the protein into the PSI complex. Required for binding of PsaD and PsaE to PSI. PSI is a plastocyanin/cytochrome c6-ferredoxin oxidoreductase, converting photonic excitation into a charge separation, which transfers an electron from the donor P700 chlorophyll pair to the spectroscopically characterized acceptors A0, A1, FX, FA and FB in turn. This is Photosystem I iron-sulfur center from Trieres chinensis (Marine centric diatom).